A 37-amino-acid polypeptide reads, in one-letter code: MKVRASVKKMCDDCKVVKRKGIVRVICKVKKHKQRQG.

Belongs to the bacterial ribosomal protein bL36 family.

The protein is Large ribosomal subunit protein bL36 of Sulfurimonas denitrificans (strain ATCC 33889 / DSM 1251) (Thiomicrospira denitrificans (strain ATCC 33889 / DSM 1251)).